Consider the following 310-residue polypeptide: p-hydroxybenzoic acid efflux pump subunit AaeA (310 aa).

The helical transmembrane segment at 12–32 (AITLVLVILAFIAIFRAWVYY) threads the bilayer.

This sequence belongs to the membrane fusion protein (MFP) (TC 8.A.1) family.

The protein localises to the cell inner membrane. In terms of biological role, forms an efflux pump with AaeB. This chain is p-hydroxybenzoic acid efflux pump subunit AaeA, found in Citrobacter koseri (strain ATCC BAA-895 / CDC 4225-83 / SGSC4696).